Here is a 327-residue protein sequence, read N- to C-terminus: Undecaprenyl-phosphate 4-deoxy-4-formamido-L-arabinose transferase (327 aa).

2 helical membrane-spanning segments follow: residues 233–253 (ILSL…LLLI) and 268–288 (VFTL…GMGL).

The protein belongs to the glycosyltransferase 2 family.

Its subcellular location is the cell inner membrane. The catalysed reaction is UDP-4-deoxy-4-formamido-beta-L-arabinose + di-trans,octa-cis-undecaprenyl phosphate = 4-deoxy-4-formamido-alpha-L-arabinopyranosyl di-trans,octa-cis-undecaprenyl phosphate + UDP. The protein operates within glycolipid biosynthesis; 4-amino-4-deoxy-alpha-L-arabinose undecaprenyl phosphate biosynthesis; 4-amino-4-deoxy-alpha-L-arabinose undecaprenyl phosphate from UDP-4-deoxy-4-formamido-beta-L-arabinose and undecaprenyl phosphate: step 1/2. It functions in the pathway bacterial outer membrane biogenesis; lipopolysaccharide biosynthesis. Its function is as follows. Catalyzes the transfer of 4-deoxy-4-formamido-L-arabinose from UDP to undecaprenyl phosphate. The modified arabinose is attached to lipid A and is required for resistance to polymyxin and cationic antimicrobial peptides. The sequence is that of Undecaprenyl-phosphate 4-deoxy-4-formamido-L-arabinose transferase from Pectobacterium atrosepticum (strain SCRI 1043 / ATCC BAA-672) (Erwinia carotovora subsp. atroseptica).